Reading from the N-terminus, the 725-residue chain is Peroxisomal fatty acid beta-oxidation multifunctional protein MFP2 (725 aa).

Glutamate 119 serves as the catalytic Nucleophile. Glutamate 139 (proton acceptor) is an active-site residue. Positions 723-725 (SRL) match the Microbody targeting signal motif.

It in the N-terminal section; belongs to the enoyl-CoA hydratase/isomerase family. This sequence in the central section; belongs to the 3-hydroxyacyl-CoA dehydrogenase family. As to expression, highly expressed in senescing leaves and at lower levels in flowers and siliques.

It is found in the glyoxysome. The protein resides in the peroxisome. It carries out the reaction a (3S)-3-hydroxyacyl-CoA = a (2E)-enoyl-CoA + H2O. The catalysed reaction is a 4-saturated-(3S)-3-hydroxyacyl-CoA = a (3E)-enoyl-CoA + H2O. It catalyses the reaction (3S)-3-hydroxybutanoyl-CoA = (2E)-butenoyl-CoA + H2O. The enzyme catalyses (3S)-hydroxyoctanoyl-CoA = (2E)-octenoyl-CoA + H2O. It carries out the reaction (3S)-3-hydroxydodecanoyl-CoA = (2E)-dodecenoyl-CoA + H2O. The catalysed reaction is (3S)-hydroxytetradecanoyl-CoA = (2E)-tetradecenoyl-CoA + H2O. It catalyses the reaction (3S)-hydroxyhexanoyl-CoA = (2E)-hexenoyl-CoA + H2O. The enzyme catalyses a (3Z)-enoyl-CoA = a 4-saturated (2E)-enoyl-CoA. It carries out the reaction a (3E)-enoyl-CoA = a 4-saturated (2E)-enoyl-CoA. The catalysed reaction is (3S)-3-hydroxybutanoyl-CoA = (3R)-3-hydroxybutanoyl-CoA. It catalyses the reaction a (3S)-3-hydroxyacyl-CoA + NAD(+) = a 3-oxoacyl-CoA + NADH + H(+). The enzyme catalyses (3S)-3-hydroxybutanoyl-CoA + NAD(+) = acetoacetyl-CoA + NADH + H(+). It carries out the reaction (3S)-hydroxyhexanoyl-CoA + NAD(+) = 3-oxohexanoyl-CoA + NADH + H(+). The catalysed reaction is (3S)-hydroxyoctanoyl-CoA + NAD(+) = 3-oxooctanoyl-CoA + NADH + H(+). It catalyses the reaction (3S)-3-hydroxydodecanoyl-CoA + NAD(+) = 3-oxododecanoyl-CoA + NADH + H(+). The enzyme catalyses (3S)-hydroxytetradecanoyl-CoA + NAD(+) = 3-oxotetradecanoyl-CoA + NADH + H(+). Its pathway is lipid metabolism; fatty acid beta-oxidation. In terms of biological role, involved in peroxisomal fatty acid beta-oxidation during seed germination. Possesses enoyl-CoA hydratase activity against long chain substrates (C14-C18) and 3-hydroxyacyl-CoA dehydrogenase activity against chains of variable sizes (C6-C18). Possesses 3-hydroxy-3-phenylpropionyl-CoA dehydrogenase activity and is involved in the peroxisomal beta-oxidation pathway for the biosynthesis of benzoic acid (BA). Required for the accumulation in seeds of substituted hydroxybenzoylated choline esters, which are BA-containing secondary metabolites. Fatty acid beta-oxidation pathway in peroxisomes regulates gene silencing, histone acetylation and DNA methylation. The polypeptide is Peroxisomal fatty acid beta-oxidation multifunctional protein MFP2 (Arabidopsis thaliana (Mouse-ear cress)).